Here is a 346-residue protein sequence, read N- to C-terminus: Protease inhibitor Egf1.5b (346 aa).

The signal sequence occupies residues 1-28; it reads MYIDTGIMSNNIFLFAFFALVGLTRIEA. The region spanning 52–104 is the TIL domain; it reads CRENEHYNSTRIECEDECNDRNNKLCYRFQQFCWCNEGYIRNSSHICVKLEDC.

It belongs to the polydnaviridae EGF-like motif protein family. Interacts with host PAP1, PAP3 and SPH2.

In terms of biological role, counteracts the host humoral immune response by inhibiting the processing and the amidolytic activity of host PAP1 and PAP3. Thereby, melanization of host hemolymph, normally producing several reactive intermediates toxic for viruses, is deregulated and proper immune response cannot occur. The polypeptide is Protease inhibitor Egf1.5b (O5) (Microplitis demolitor (Parasitoid wasp)).